We begin with the raw amino-acid sequence, 352 residues long: B1 bradykinin receptor (352 aa).

At 1–41 (MASWPPLELQSSNQSQLFPQNATACDNAPEAWDLLHRVLPT) the chain is on the extracellular side. Asn-13 and Asn-21 each carry an N-linked (GlcNAc...) asparagine glycan. Residues 42-62 (FIISICSFGLLGNLFVLLVFL) traverse the membrane as a helical segment. At 63–72 (LPRRRLNVAE) the chain is on the cytoplasmic side. A helical transmembrane segment spans residues 73 to 93 (IYLANLAASDLVFVLGLPFWA). Residues 94-110 (ENIWNQFNWPFGALLCR) lie on the Extracellular side of the membrane. An intrachain disulfide couples Cys-109 to Cys-188. A helical membrane pass occupies residues 111–131 (GINGVIKANLFISIFLVVAIS). The Cytoplasmic portion of the chain corresponds to 132–153 (QDRYCLLVHPMASRRRQRRRQA). Residues 154–174 (RVTCVLIWVVGGLLSIPTFLL) traverse the membrane as a helical segment. Over 175-206 (RSIQAVPDLNITACILLLPHEAWHFARIVELN) the chain is Extracellular. Residue Asn-184 is glycosylated (N-linked (GlcNAc...) asparagine). Residues 207 to 227 (ILAFLLPLAAIVFFNYHILAS) traverse the membrane as a helical segment. The Cytoplasmic portion of the chain corresponds to 228-250 (LRGREEVSRTRCGGRKDSKTTAL). Residues 251 to 271 (ILTLVVAFLVCWAPYHFFAFL) traverse the membrane as a helical segment. At 272–294 (EFLFQVQAIRGCFWEDFIDLGLQ) the chain is on the extracellular side. Residues 295 to 315 (LANFLAFTNSSLNPVIYVFVG) form a helical membrane-spanning segment. Residues 316 to 352 (RLFRTKVWELYKQCTPKSLAPISSSHRKEIFQLFWRN) are Cytoplasmic-facing. A lipid anchor (S-palmitoyl cysteine) is attached at Cys-329.

Belongs to the G-protein coupled receptor 1 family. Bradykinin receptor subfamily. BDKRB1 sub-subfamily.

Its subcellular location is the cell membrane. This is a receptor for bradykinin. Could be a factor in chronic pain and inflammation. The protein is B1 bradykinin receptor (BDKRB1) of Chlorocebus aethiops (Green monkey).